The chain runs to 403 residues: Argininosuccinate synthase (403 aa).

An ATP-binding site is contributed by 10–18 (AYSGGLDTS). L-citrulline is bound at residue tyrosine 87. Residue glycine 117 coordinates ATP. L-aspartate contacts are provided by threonine 119, asparagine 123, and aspartate 124. L-citrulline is bound at residue asparagine 123. 4 residues coordinate L-citrulline: arginine 127, serine 175, glutamate 260, and tyrosine 272.

The protein belongs to the argininosuccinate synthase family. Type 1 subfamily. In terms of assembly, homotetramer.

The protein localises to the cytoplasm. It catalyses the reaction L-citrulline + L-aspartate + ATP = 2-(N(omega)-L-arginino)succinate + AMP + diphosphate + H(+). It functions in the pathway amino-acid biosynthesis; L-arginine biosynthesis; L-arginine from L-ornithine and carbamoyl phosphate: step 2/3. The polypeptide is Argininosuccinate synthase (Bacillus subtilis (strain 168)).